Consider the following 589-residue polypeptide: Early growth response protein 4 (589 aa).

Disordered regions lie at residues 29-101 (GSAL…HSRR), 383-411 (AEGLPGLLTPPSGEGGSSGDGGEFLASTQ), and 436-466 (PGSSGVAAPPVPPPPPTPFPQAKARRKGRRG). Over residues 76-86 (PLPPASPPPAR) the composition is skewed to pro residues. A compositionally biased stretch (basic residues) spans 92 to 101 (ARPRAPHSRR). The segment covering 395-404 (GEGGSSGDGG) has biased composition (gly residues). Positions 444-454 (PPVPPPPPTPF) are enriched in pro residues. C2H2-type zinc fingers lie at residues 483–507 (FACPVESCVRSFARSDELNRHLRIH), 513–535 (FQCRICLRNFSRSDHLTTHVRTH), and 541–563 (FACDVCGRRFARSDEKKRHSKVH).

This sequence belongs to the EGR C2H2-type zinc-finger protein family.

The protein resides in the nucleus. Its function is as follows. Transcriptional regulator. Recognizes and binds to the DNA sequence 5'-GCGGGGGCG-3' (GSG). Activates the transcription of target genes whose products are required for mitogenesis and differentiation. This Homo sapiens (Human) protein is Early growth response protein 4 (EGR4).